The sequence spans 378 residues: Protein RecA (378 aa).

Residue 66 to 73 (GPESSGKT) coordinates ATP. The disordered stretch occupies residues 333–378 (PDAAKAEAATDAAAAADTAGTDDAAKSVPAPASKTAKATKATAVKS). The segment covering 338–378 (AEAATDAAAAADTAGTDDAAKSVPAPASKTAKATKATAVKS) has biased composition (low complexity).

Belongs to the RecA family.

It localises to the cytoplasm. In terms of biological role, can catalyze the hydrolysis of ATP in the presence of single-stranded DNA, the ATP-dependent uptake of single-stranded DNA by duplex DNA, and the ATP-dependent hybridization of homologous single-stranded DNAs. It interacts with LexA causing its activation and leading to its autocatalytic cleavage. The chain is Protein RecA from Streptomyces venezuelae (strain ATCC 10712 / CBS 650.69 / DSM 40230 / JCM 4526 / NBRC 13096 / PD 04745).